A 671-amino-acid polypeptide reads, in one-letter code: DNA ligase (671 aa).

Residues 32–36, 81–82, and Glu113 contribute to the NAD(+) site; these read DAEYD and SL. Lys115 functions as the N6-AMP-lysine intermediate in the catalytic mechanism. Arg136, Glu173, Lys290, and Lys314 together coordinate NAD(+). Cys408, Cys411, Cys426, and Cys432 together coordinate Zn(2+). In terms of domain architecture, BRCT spans 593–671; that stretch reads EIDSPFAGKT…EAEMLRLFGE (79 aa).

This sequence belongs to the NAD-dependent DNA ligase family. LigA subfamily. It depends on Mg(2+) as a cofactor. Mn(2+) serves as cofactor.

It carries out the reaction NAD(+) + (deoxyribonucleotide)n-3'-hydroxyl + 5'-phospho-(deoxyribonucleotide)m = (deoxyribonucleotide)n+m + AMP + beta-nicotinamide D-nucleotide.. Its function is as follows. DNA ligase that catalyzes the formation of phosphodiester linkages between 5'-phosphoryl and 3'-hydroxyl groups in double-stranded DNA using NAD as a coenzyme and as the energy source for the reaction. It is essential for DNA replication and repair of damaged DNA. This Enterobacter sp. (strain 638) protein is DNA ligase.